Reading from the N-terminus, the 183-residue chain is Fetal and adult testis-expressed transcript protein (183 aa).

Positions 42–66 (SRSRGASQKKQKLEQKAAGSASAKR) are disordered. The helical transmembrane segment at 163–181 (TLIIAVLVSASIANLWLWM) threads the bilayer.

Interacts with BIK and RNF183. Interacts with IMMT/MIC60and EMD. As to expression, testis-specific in fetus (aged from 6 to 11 weeks). In adult, expressed predominantly in testis, with some expression in lung, heart, kidney, adrenal gland and whole brain. Highly expressed in certain types of cancer tissues such as hepatocellular carcinoma, colon and gastric cancer. Weakly expressed in normal pancreas.

The protein resides in the mitochondrion. It is found in the mitochondrion outer membrane. The protein localises to the endoplasmic reticulum membrane. Involved in the regulation of endoplasmic reticulum (ER)-mitochondria coupling. Negatively regulates the ER-mitochondria distance and Ca(2+) transfer from ER to mitochondria possibly implicating it in the regulation of apoptosis. May collaborate with RNF183 to restrain BIK protein levels thus regulating apoptotic signaling. This chain is Fetal and adult testis-expressed transcript protein (FATE1), found in Homo sapiens (Human).